The chain runs to 135 residues: uncharacterized protein (135 aa).

This sequence belongs to the asp23 family.

This is an uncharacterized protein from Bacillus subtilis (strain 168).